Consider the following 175-residue polypeptide: Endoribonuclease YbeY (175 aa).

Residues histidine 137, histidine 141, and histidine 147 each contribute to the Zn(2+) site.

It belongs to the endoribonuclease YbeY family. Zn(2+) is required as a cofactor.

It localises to the cytoplasm. Single strand-specific metallo-endoribonuclease involved in late-stage 70S ribosome quality control and in maturation of the 3' terminus of the 16S rRNA. This is Endoribonuclease YbeY from Burkholderia ambifaria (strain ATCC BAA-244 / DSM 16087 / CCUG 44356 / LMG 19182 / AMMD) (Burkholderia cepacia (strain AMMD)).